The chain runs to 206 residues: MGSETTAAGDALDALDWNKGDGLLPVIVQDADNLRVLMLGYMNAEALAVTRARGEVTFFSRSKQRLWTKGESSGNVLRVVAIETDCDADTLLVQARPHGPTCHLGRTSCFPTAPSQFLGSLDALIAEREHERPHGSYTTKLFEQGIRRIAQKVGEEGVETALAGVVQGDAELLGESADLLYHLIVLLRARGLGLGDAVALLESRHK.

The phosphoribosyl-AMP cyclohydrolase stretch occupies residues 1-117; sequence MGSETTAAGD…SCFPTAPSQF (117 aa). A phosphoribosyl-ATP pyrophosphohydrolase region spans residues 118–206; sequence LGSLDALIAE…AVALLESRHK (89 aa).

It in the N-terminal section; belongs to the PRA-CH family. This sequence in the C-terminal section; belongs to the PRA-PH family.

It localises to the cytoplasm. The catalysed reaction is 1-(5-phospho-beta-D-ribosyl)-ATP + H2O = 1-(5-phospho-beta-D-ribosyl)-5'-AMP + diphosphate + H(+). It catalyses the reaction 1-(5-phospho-beta-D-ribosyl)-5'-AMP + H2O = 1-(5-phospho-beta-D-ribosyl)-5-[(5-phospho-beta-D-ribosylamino)methylideneamino]imidazole-4-carboxamide. It functions in the pathway amino-acid biosynthesis; L-histidine biosynthesis; L-histidine from 5-phospho-alpha-D-ribose 1-diphosphate: step 2/9. It participates in amino-acid biosynthesis; L-histidine biosynthesis; L-histidine from 5-phospho-alpha-D-ribose 1-diphosphate: step 3/9. The chain is Histidine biosynthesis bifunctional protein HisIE from Xanthomonas campestris pv. campestris (strain ATCC 33913 / DSM 3586 / NCPPB 528 / LMG 568 / P 25).